The primary structure comprises 264 residues: 3-methyl-2-oxobutanoate hydroxymethyltransferase (264 aa).

Residues Asp45 and Asp84 each contribute to the Mg(2+) site. 3-methyl-2-oxobutanoate contacts are provided by residues 45–46 (DS), Asp84, and Lys112. Glu114 contributes to the Mg(2+) binding site. Glu181 (proton acceptor) is an active-site residue.

This sequence belongs to the PanB family. As to quaternary structure, homodecamer; pentamer of dimers. Mg(2+) is required as a cofactor.

The protein resides in the cytoplasm. The catalysed reaction is 3-methyl-2-oxobutanoate + (6R)-5,10-methylene-5,6,7,8-tetrahydrofolate + H2O = 2-dehydropantoate + (6S)-5,6,7,8-tetrahydrofolate. The protein operates within cofactor biosynthesis; (R)-pantothenate biosynthesis; (R)-pantoate from 3-methyl-2-oxobutanoate: step 1/2. In terms of biological role, catalyzes the reversible reaction in which hydroxymethyl group from 5,10-methylenetetrahydrofolate is transferred onto alpha-ketoisovalerate to form ketopantoate. The chain is 3-methyl-2-oxobutanoate hydroxymethyltransferase from Vibrio campbellii (strain ATCC BAA-1116).